A 707-amino-acid chain; its full sequence is E3 ubiquitin-protein ligase MARCHF7 (707 aa).

The residue at position 1 (M1) is an N-acetylmethionine. Disordered stretches follow at residues 1-126 (MESK…QVPR), 157-279 (LMDY…RRTT), 294-343 (FFSR…RASE), 361-425 (SHNH…HIFR), and 444-473 (AANR…GRNT). Low complexity predominate over residues 17 to 33 (SSSLSARMMSGSRGSSL). Over residues 37 to 48 (YHSRDSSFRLDS) the composition is skewed to basic and acidic residues. The segment covering 52 to 65 (STSASASASPFQSA) has biased composition (low complexity). Composition is skewed to polar residues over residues 66–83 (WYSE…SQNQ), 95–126 (SCTN…QVPR), 189–212 (NSMS…HQTI), and 254–270 (ISNS…FQES). A compositionally biased stretch (low complexity) spans 294–303 (FFSRRSSQDS). Composition is skewed to polar residues over residues 304 to 336 (LNTR…TSEV), 373 to 392 (FNQE…SLRN), and 412 to 421 (IPTSDTSSRS). A phosphoserine mark is found at S317 and S389. The segment covering 444–470 (AANRPQASAASSSATTGGSTSDSAQGG) has biased composition (low complexity). The RING-CH-type zinc-finger motif lies at 544 to 614 (SEEEEGDLCR…ELCKEKLELN (71 aa)). Positions 552, 555, 570, 572, 580, 583, 604, and 607 each coordinate Zn(2+). Position 686 is a phosphothreonine (T686). 2 positions are modified to phosphoserine: S687 and S691.

The protein localises to the cytoplasm. The enzyme catalyses S-ubiquitinyl-[E2 ubiquitin-conjugating enzyme]-L-cysteine + [acceptor protein]-L-lysine = [E2 ubiquitin-conjugating enzyme]-L-cysteine + N(6)-ubiquitinyl-[acceptor protein]-L-lysine.. The protein operates within protein modification; protein ubiquitination. Functionally, E3 ubiquitin-protein ligase which may specifically enhance the E2 activity of HIP2. E3 ubiquitin ligases accept ubiquitin from an E2 ubiquitin-conjugating enzyme in the form of a thioester and then directly transfer the ubiquitin to targeted substrates. May be involved in T-cell proliferation by regulating LIF secretion. May play a role in lysosome homeostasis. Promotes 'Lys-6', 'Lys-11' and 'Lys-63'-linked mixed polyubiquitination on ATG14 leading to the inhibition of autophagy by impairing the interaction between ATG14 and STX7. Participates in the dopamine-mediated negative regulation of the NLRP3 inflammasome by promoting its uibiquitination and subsequent degradation. In Pongo abelii (Sumatran orangutan), this protein is E3 ubiquitin-protein ligase MARCHF7 (MARCHF7).